The chain runs to 430 residues: MTTLTLNTSLLSSRRILAAFSGGLDSTVLLHQLVLWRERHPDVTLRAIHIHHGLSPHAESWVRHCETVCARWQVPLVVERVTLADNGLGIEAHAREARYRAFAQTLLPGEVLATAQHLDDQCETFLLALKRGSGPAGLSAMGERSPFAGTLLLRPLLRETRKTLEQWAVRHGLCWIEDESNQDDAYDRNFLRLRALPLLQQRWPHFPAAVARSATLCAEQERLLDELLASDLTDCITTEGTLRLSPLMSMSDVRRAAILRRWLAMRNAPMPSRDALERIWQEVALARDDASPCLRFGDHEIRRYQSQLWWIKSVAGQHETTVAWPVWQTPLALPAGLGTVQLVPGGELRRPREEESVSIRFKAPGLLHIVGRHGGRKLKKIWQEQGIPPWRRDTTPLLFYGETLIAAAGVFVTREGAAEDKEGVSLVWHA.

21–26 (SGGLDS) contributes to the ATP binding site.

The protein belongs to the tRNA(Ile)-lysidine synthase family.

It localises to the cytoplasm. It carries out the reaction cytidine(34) in tRNA(Ile2) + L-lysine + ATP = lysidine(34) in tRNA(Ile2) + AMP + diphosphate + H(+). In terms of biological role, ligates lysine onto the cytidine present at position 34 of the AUA codon-specific tRNA(Ile) that contains the anticodon CAU, in an ATP-dependent manner. Cytidine is converted to lysidine, thus changing the amino acid specificity of the tRNA from methionine to isoleucine. This Salmonella dublin (strain CT_02021853) protein is tRNA(Ile)-lysidine synthase.